The following is an 87-amino-acid chain: Putative autophagy-related protein 8E (87 aa).

The segment covering 1 to 14 has biased composition (basic and acidic residues); that stretch reads MEERRKEKGKEGRR. The segment at 1 to 30 is disordered; the sequence is MEERRKEKGKEGRRGKATGHSVDKFSRSNL. The Phosphatidylethanolamine amidated glycine moiety is linked to residue Gly87.

Belongs to the ATG8 family. As to quaternary structure, interacts with ATG4. The C-terminal Gly is amidated with phosphatidylethanolamine by an activating system similar to that for ubiquitin.

It is found in the cytoplasmic vesicle. It localises to the autophagosome membrane. The protein resides in the vacuole membrane. The protein localises to the cytoplasm. Its subcellular location is the cytoskeleton. Its function is as follows. Ubiquitin-like modifier involved in autophagosomes formation. May mediate the delivery of the autophagosomes to the vacuole via the microtubule cytoskeleton. The protein is Putative autophagy-related protein 8E (ATG8E) of Oryza sativa subsp. japonica (Rice).